Here is a 332-residue protein sequence, read N- to C-terminus: Malate dehydrogenase (332 aa).

NAD(+) contacts are provided by residues 11–16 (GAGNVG) and D35. Residues R97 and R103 each contribute to the substrate site. Residues N110 and 133-135 (VTN) each bind NAD(+). Residues N135 and R166 each coordinate substrate. H190 acts as the Proton acceptor in catalysis.

It belongs to the LDH/MDH superfamily. MDH type 3 family.

The enzyme catalyses (S)-malate + NAD(+) = oxaloacetate + NADH + H(+). In terms of biological role, catalyzes the reversible oxidation of malate to oxaloacetate. This Hydrogenobaculum sp. (strain Y04AAS1) protein is Malate dehydrogenase.